The primary structure comprises 509 residues: 3-ketoacyl-CoA synthase 11 (509 aa).

Helical transmembrane passes span 36–56 (LITHGMYLFLSPLVLVIAAQI) and 75–95 (LISVVVCSMLLVFLMTIYFMT). The FAE domain occupies 92–381 (YFMTRPRPVY…FFATLVGRKL (290 aa)). Catalysis depends on residues Cys-236, His-315, His-399, His-403, and Asn-436.

It belongs to the thiolase-like superfamily. Chalcone/stilbene synthases family. In terms of tissue distribution, only expressed in guard cells. Expressed in siliques, flowers, leaves, stems, roots and seedlings.

The protein resides in the membrane. It carries out the reaction a very-long-chain acyl-CoA + malonyl-CoA + H(+) = a very-long-chain 3-oxoacyl-CoA + CO2 + CoA. The protein operates within lipid metabolism; fatty acid biosynthesis. Its function is as follows. Active on both saturated and mono-unsaturated acyl chains C16 to C20. This chain is 3-ketoacyl-CoA synthase 11, found in Arabidopsis thaliana (Mouse-ear cress).